The chain runs to 131 residues: D-ribose pyranase (131 aa).

The active-site Proton donor is His20. Substrate contacts are provided by residues Asp28, His98, and 120 to 122 (YAN).

Belongs to the RbsD / FucU family. RbsD subfamily. In terms of assembly, homodecamer.

Its subcellular location is the cytoplasm. The enzyme catalyses beta-D-ribopyranose = beta-D-ribofuranose. It participates in carbohydrate metabolism; D-ribose degradation; D-ribose 5-phosphate from beta-D-ribopyranose: step 1/2. Catalyzes the interconversion of beta-pyran and beta-furan forms of D-ribose. The sequence is that of D-ribose pyranase from Bacillus licheniformis (strain ATCC 14580 / DSM 13 / JCM 2505 / CCUG 7422 / NBRC 12200 / NCIMB 9375 / NCTC 10341 / NRRL NRS-1264 / Gibson 46).